A 564-amino-acid polypeptide reads, in one-letter code: Dihydroxy-acid dehydratase (564 aa).

[2Fe-2S] cluster is bound at residue Cys55. Position 87 (Asp87) interacts with Mg(2+). Cys128 provides a ligand contact to [2Fe-2S] cluster. Mg(2+)-binding residues include Asp129 and Lys130. Lys130 is modified (N6-carboxylysine). Cys200 serves as a coordination point for [2Fe-2S] cluster. Glu452 serves as a coordination point for Mg(2+). Catalysis depends on Ser478, which acts as the Proton acceptor.

The protein belongs to the IlvD/Edd family. Homodimer. [2Fe-2S] cluster is required as a cofactor. The cofactor is Mg(2+).

The catalysed reaction is (2R)-2,3-dihydroxy-3-methylbutanoate = 3-methyl-2-oxobutanoate + H2O. It carries out the reaction (2R,3R)-2,3-dihydroxy-3-methylpentanoate = (S)-3-methyl-2-oxopentanoate + H2O. The protein operates within amino-acid biosynthesis; L-isoleucine biosynthesis; L-isoleucine from 2-oxobutanoate: step 3/4. It functions in the pathway amino-acid biosynthesis; L-valine biosynthesis; L-valine from pyruvate: step 3/4. In terms of biological role, functions in the biosynthesis of branched-chain amino acids. Catalyzes the dehydration of (2R,3R)-2,3-dihydroxy-3-methylpentanoate (2,3-dihydroxy-3-methylvalerate) into 2-oxo-3-methylpentanoate (2-oxo-3-methylvalerate) and of (2R)-2,3-dihydroxy-3-methylbutanoate (2,3-dihydroxyisovalerate) into 2-oxo-3-methylbutanoate (2-oxoisovalerate), the penultimate precursor to L-isoleucine and L-valine, respectively. This chain is Dihydroxy-acid dehydratase, found in Albidiferax ferrireducens (strain ATCC BAA-621 / DSM 15236 / T118) (Rhodoferax ferrireducens).